A 528-amino-acid chain; its full sequence is Glucose-6-phosphate isomerase (528 aa).

E322 (proton donor) is an active-site residue. Catalysis depends on residues H351 and K455.

The protein belongs to the GPI family.

The protein localises to the cytoplasm. It catalyses the reaction alpha-D-glucose 6-phosphate = beta-D-fructose 6-phosphate. It functions in the pathway carbohydrate biosynthesis; gluconeogenesis. Its pathway is carbohydrate degradation; glycolysis; D-glyceraldehyde 3-phosphate and glycerone phosphate from D-glucose: step 2/4. In terms of biological role, catalyzes the reversible isomerization of glucose-6-phosphate to fructose-6-phosphate. This chain is Glucose-6-phosphate isomerase, found in Nostoc sp. (strain PCC 7120 / SAG 25.82 / UTEX 2576).